Here is a 476-residue protein sequence, read N- to C-terminus: Sulfate adenylyltransferase subunit 1 (476 aa).

In terms of domain architecture, tr-type G spans 17–232; the sequence is KDLLRLLTAG…LETVHIDSDN (216 aa). A G1 region spans residues 26–33; it reads GSVDDGKS. 26–33 contributes to the GTP binding site; it reads GSVDDGKS. The segment at 84-88 is G2; that stretch reads GITID. The tract at residues 105 to 108 is G3; that stretch reads DTPG. GTP-binding positions include 105-109 and 160-163; these read DTPGH and NKMD. The segment at 160–163 is G4; that stretch reads NKMD. Residues 197–199 form a G5 region; sequence SAL.

It belongs to the TRAFAC class translation factor GTPase superfamily. Classic translation factor GTPase family. CysN/NodQ subfamily. Heterodimer composed of CysD, the smaller subunit, and CysN.

It catalyses the reaction sulfate + ATP + H(+) = adenosine 5'-phosphosulfate + diphosphate. Its pathway is sulfur metabolism; hydrogen sulfide biosynthesis; sulfite from sulfate: step 1/3. In terms of biological role, with CysD forms the ATP sulfurylase (ATPS) that catalyzes the adenylation of sulfate producing adenosine 5'-phosphosulfate (APS) and diphosphate, the first enzymatic step in sulfur assimilation pathway. APS synthesis involves the formation of a high-energy phosphoric-sulfuric acid anhydride bond driven by GTP hydrolysis by CysN coupled to ATP hydrolysis by CysD. The protein is Sulfate adenylyltransferase subunit 1 of Bacteroides fragilis (strain YCH46).